The primary structure comprises 313 residues: Secreted mono- and diacylglycerol lipase MDL5 (313 aa).

Positions 1–20 (MQLQYVLTLLWIIFAQNVFS) are cleaved as a signal peptide. An intrachain disulfide couples Cys-66 to Cys-306. 2 N-linked (GlcNAc...) asparagine glycosylation sites follow: Asn-72 and Asn-111. Catalysis depends on Ser-180, which acts as the Nucleophile. The active site involves Asp-238. Asn-263 carries an N-linked (GlcNAc...) asparagine glycan. His-290 is a catalytic residue.

This sequence belongs to the AB hydrolase superfamily. Lipase family. Class 3 subfamily.

Its subcellular location is the secreted. It localises to the cell wall. It catalyses the reaction a monoacylglycerol + H2O = glycerol + a fatty acid + H(+). It carries out the reaction a diacylglycerol + H2O = a monoacylglycerol + a fatty acid + H(+). In terms of biological role, secreted lipase involved in Dandruff and seborrheic dermatitis (D/SD) probably via lipase-mediated breakdown of sebaceous lipids and release of irritating free fatty acids. Shows activity against monoglyceride and diglyceride substrates, but not triglyceride substrates and does not exhibit regio-selective production of diacylglycerols. Cleaves oleic acid from 1,2 isomers of diolein on both the 1 and the 2 position of the glycerol backbone, resulting mainly in free fatty acids but no monoolein is detected. Shows activity on monoolein and liberates mostly free fatty acids, but can also perform the reverse reaction and produce diolein. This chain is Secreted mono- and diacylglycerol lipase MDL5, found in Malassezia globosa (strain ATCC MYA-4612 / CBS 7966) (Dandruff-associated fungus).